The primary structure comprises 199 residues: Recombination protein RecR (199 aa).

Residues 57-72 form a C4-type zinc finger; the sequence is CQKCRTFTEQSLCPIC. One can recognise a Toprim domain in the interval 81-176; it reads DTLCVVETPA…AVSRIAHGVP (96 aa).

Belongs to the RecR family.

Functionally, may play a role in DNA repair. It seems to be involved in an RecBC-independent recombinational process of DNA repair. It may act with RecF and RecO. This is Recombination protein RecR from Shewanella amazonensis (strain ATCC BAA-1098 / SB2B).